The primary structure comprises 586 residues: GRB2-associated-binding protein 3 (586 aa).

A PH domain is found at 5–117 (DAVCTGWLVK…WVHSISQVCN (113 aa)). 2 disordered regions span residues 149 to 171 (AHAA…TEET) and 281 to 335 (SSTI…KKPE). The span at 283 to 292 (TIQVDKNQGS) shows a compositional bias: polar residues. The segment covering 316–326 (HLSERRQEEWS) has biased composition (basic and acidic residues). Serine 344 is subject to Phosphoserine. Residues 401–453 (GASGLGPHCSPDDYIPMNSGSISSPLPELPANLEPPPVNRDLKPQRKSRPPPL) are disordered. Residue serine 482 is modified to Phosphoserine.

This sequence belongs to the GAB family. As to quaternary structure, interacts with PIK3R/p85, SHP2 and GRAP2/MONA. May interact with Grb2. In terms of processing, phosphorylated on tyrosine residue(s) after macrophage colony-stimulating factor (M-CSF) receptor stimulation.

The polypeptide is GRB2-associated-binding protein 3 (GAB3) (Homo sapiens (Human)).